We begin with the raw amino-acid sequence, 454 residues long: Flavonoid 3-O-glucosyltransferase (454 aa).

UDP is bound at residue Thr-25. Catalysis depends on His-26, which acts as the Proton acceptor. Arg-89 contacts myricetin. The active-site Charge relay is the Asp-124. 3 residues coordinate myricetin: His-155, Glu-192, and Phe-202. UDP contacts are provided by Ser-282, Ser-308, Trp-334, and Ala-335. The UDP-alpha-D-glucose site is built by Ala-335, Gln-337, His-352, Trp-355, Asn-356, Ser-357, and Glu-360. His-352 contributes to the UDP binding site. Residues Asn-356, Ser-357, and Glu-360 each contribute to the UDP site. Gly-375 contributes to the myricetin binding site. 2 residues coordinate UDP-alpha-D-glucose: Asp-376 and Gln-377.

This sequence belongs to the UDP-glycosyltransferase family. As to expression, highly expressed in flower buds, flowers and pods. Lower expression in leaves, petioles and stems.

Its pathway is secondary metabolite biosynthesis; flavonoid biosynthesis. Its function is as follows. Catalyzes the glycosylation of flavonoids at the 3-O-position. Glycosylates the 7-O-position if the 3-O-position is not available. Also able to perform 3-O-glycosylation of anthocyanidins. In Medicago truncatula (Barrel medic), this protein is Flavonoid 3-O-glucosyltransferase (UGT78G1).